We begin with the raw amino-acid sequence, 170 residues long: Cytochrome b6-f complex subunit 4 (170 aa).

The next 3 membrane-spanning stretches (helical) occupy residues 36-56, 95-115, and 131-151; these read LLYI…GLAV, LLGV…PFLE, and TVFL…TLPI.

Belongs to the cytochrome b family. PetD subfamily. In terms of assembly, the 4 large subunits of the cytochrome b6-f complex are cytochrome b6, subunit IV (17 kDa polypeptide, petD), cytochrome f and the Rieske protein, while the 4 small subunits are petG, petL, petM and petN. The complex functions as a dimer.

It localises to the plastid. It is found in the chloroplast thylakoid membrane. Functionally, component of the cytochrome b6-f complex, which mediates electron transfer between photosystem II (PSII) and photosystem I (PSI), cyclic electron flow around PSI, and state transitions. The sequence is that of Cytochrome b6-f complex subunit 4 from Nymphaea alba (White water-lily).